A 39-amino-acid polypeptide reads, in one-letter code: Photosystem II reaction center protein L (39 aa).

A helical transmembrane segment spans residues 18–38; that stretch reads SLYLGLLVVFTTGILFSSYFF.

Belongs to the PsbL family. In terms of assembly, PSII is composed of 1 copy each of membrane proteins PsbA, PsbB, PsbC, PsbD, PsbE, PsbF, PsbH, PsbI, PsbJ, PsbK, PsbL, PsbM, PsbT, PsbX, PsbY, PsbZ, Psb30/Ycf12, peripheral proteins PsbO, CyanoQ (PsbQ), PsbU, PsbV and a large number of cofactors. It forms dimeric complexes.

It is found in the cellular thylakoid membrane. One of the components of the core complex of photosystem II (PSII). PSII is a light-driven water:plastoquinone oxidoreductase that uses light energy to abstract electrons from H(2)O, generating O(2) and a proton gradient subsequently used for ATP formation. It consists of a core antenna complex that captures photons, and an electron transfer chain that converts photonic excitation into a charge separation. This subunit is found at the monomer-monomer interface and is required for correct PSII assembly and/or dimerization. This Synechococcus sp. (strain WH7803) protein is Photosystem II reaction center protein L.